We begin with the raw amino-acid sequence, 164 residues long: Telomerase-associated protein of 19 kDa (164 aa).

Component of the telomerase holoenzyme complex, composed of the catalytic core (the catalytic subunit TERT, the telomerase RNA template component TER and TAP65/p65), which is associated with two heterotrimeric subcomplexes: (i) the replication protein A (RPA)-related subcomplex, composed of TEB1, RPA2/TEB2 and RPA3/TEB3 and (ii) the CST-like subcomplex, composed of TAP75/p75, TAP45/p45 and TAP19/p19. TEB1 and the CST-like subcomplex are tethered to the catalytic core by TAP50/p50.

Its subcellular location is the chromosome. It localises to the telomere. In terms of biological role, component of a CST-like subcomplex of the holoenzyme telomerase ribonucleoprotein complex, which stimulates telomerase complementary-strand synthesis. Telomerase is an essential ribonucleoprotein enzyme that copies new telomeric repeats onto chromosome ends by repetitively synthesizing the short telomere-repeat sequence 5'-TTGGGG-3' using an RNA template component TER. The CST-like subcomplex (also named 7-4-1) binds telomeric single-stranded DNA and coordinates telomere G-strand and C-strand synthesis. This is Telomerase-associated protein of 19 kDa from Tetrahymena thermophila (strain SB210).